The primary structure comprises 388 residues: MRYLTAGESHGPRLTAIIEGIPAGLPLTAEDINEDLRRRQGGYGRGGRMKIESDQVVFTSGVRHGKTTGAPITMDVINKDHQKWLDIMSAEDIEDRLKSKRKITHPRPGHADLVGGIKYRFDDLRNSLERSSARETTMRVAVGAVAKRLLAELDMEIANHVVVFGGKEIDVPENLTVAEIKQRAAQSEVSIVNQEREQEIKDYIDQIKRDGDTIGGVVETVVGGVPVGLGSYVQWDRKLDARLAQAVVSINAFKGVEFGLGFEAGYRKGSQVMDEILWSKEDGYTRRTNNLGGFEGGMTNGQPIVVRGVMKPIPTLYKPLMSVDIETHEPYKATVERSDPTALPAAGMVMEAVVATVLAQEILEKFSSDNLEELKEAVAKHRDYTKNY.

The NADP(+) site is built by Arg-39 and Arg-45. Residues 130–132 (RSS), 251–252 (NA), Gly-296, 311–315 (KPIPT), and Arg-337 each bind FMN.

It belongs to the chorismate synthase family. As to quaternary structure, homotetramer. FMNH2 serves as cofactor.

It carries out the reaction 5-O-(1-carboxyvinyl)-3-phosphoshikimate = chorismate + phosphate. The protein operates within metabolic intermediate biosynthesis; chorismate biosynthesis; chorismate from D-erythrose 4-phosphate and phosphoenolpyruvate: step 7/7. Catalyzes the anti-1,4-elimination of the C-3 phosphate and the C-6 proR hydrogen from 5-enolpyruvylshikimate-3-phosphate (EPSP) to yield chorismate, which is the branch point compound that serves as the starting substrate for the three terminal pathways of aromatic amino acid biosynthesis. This reaction introduces a second double bond into the aromatic ring system. This chain is Chorismate synthase, found in Streptococcus pneumoniae (strain 70585).